We begin with the raw amino-acid sequence, 50 residues long: Large ribosomal subunit protein bL32 (50 aa).

Residues 1 to 26 (MAVPKRRVSHTRSAKRRTHYKITLKK) show a composition bias toward basic residues. Residues 1–50 (MAVPKRRVSHTRSAKRRTHYKITLKKPVKDSDGSWKMPHMVNPNTGEYKN) form a disordered region.

It belongs to the bacterial ribosomal protein bL32 family.

The protein is Large ribosomal subunit protein bL32 of Aliarcobacter butzleri (strain RM4018) (Arcobacter butzleri).